The sequence spans 186 residues: Peptidyl-tRNA hydrolase (186 aa).

Tyr14 serves as a coordination point for tRNA. His19 (proton acceptor) is an active-site residue. TRNA-binding residues include Tyr64, Asn66, and Asn112.

This sequence belongs to the PTH family. Monomer.

Its subcellular location is the cytoplasm. It catalyses the reaction an N-acyl-L-alpha-aminoacyl-tRNA + H2O = an N-acyl-L-amino acid + a tRNA + H(+). Hydrolyzes ribosome-free peptidyl-tRNAs (with 1 or more amino acids incorporated), which drop off the ribosome during protein synthesis, or as a result of ribosome stalling. Functionally, catalyzes the release of premature peptidyl moieties from peptidyl-tRNA molecules trapped in stalled 50S ribosomal subunits, and thus maintains levels of free tRNAs and 50S ribosomes. This Bacillus cytotoxicus (strain DSM 22905 / CIP 110041 / 391-98 / NVH 391-98) protein is Peptidyl-tRNA hydrolase.